Reading from the N-terminus, the 165-residue chain is Putative universal stress protein SH1215 (165 aa).

This sequence belongs to the universal stress protein A family.

The protein resides in the cytoplasm. This Staphylococcus haemolyticus (strain JCSC1435) protein is Putative universal stress protein SH1215.